A 93-amino-acid chain; its full sequence is MLEHALIAGAFSFCIGISGLITSRNMVRAPMCLESIFNAVNVNSVVSSNTLDAEEIKGEIFAIFVIAIAAAEAAIGLSIALAIYRNRKSTRVD.

A run of 2 helical transmembrane segments spans residues 1–21 and 60–80; these read MLEH…SGLI and IFAI…LSIA.

This sequence belongs to the complex I subunit 4L family. NDH is composed of at least 16 different subunits, 5 of which are encoded in the nucleus.

Its subcellular location is the plastid. The protein localises to the chloroplast thylakoid membrane. The enzyme catalyses a plastoquinone + NADH + (n+1) H(+)(in) = a plastoquinol + NAD(+) + n H(+)(out). It carries out the reaction a plastoquinone + NADPH + (n+1) H(+)(in) = a plastoquinol + NADP(+) + n H(+)(out). In terms of biological role, NDH shuttles electrons from NAD(P)H:plastoquinone, via FMN and iron-sulfur (Fe-S) centers, to quinones in the photosynthetic chain and possibly in a chloroplast respiratory chain. The immediate electron acceptor for the enzyme in this species is believed to be plastoquinone. Couples the redox reaction to proton translocation, and thus conserves the redox energy in a proton gradient. The protein is NAD(P)H-quinone oxidoreductase subunit 4L, chloroplastic of Anthoceros angustus (Hornwort).